The primary structure comprises 316 residues: Putative S-adenosyl-L-methionine-dependent methyltransferase MAB_4606c (316 aa).

Residues D137 and 166 to 167 each bind S-adenosyl-L-methionine; that span reads DL.

It belongs to the UPF0677 family.

Functionally, exhibits S-adenosyl-L-methionine-dependent methyltransferase activity. The sequence is that of Putative S-adenosyl-L-methionine-dependent methyltransferase MAB_4606c from Mycobacteroides abscessus (strain ATCC 19977 / DSM 44196 / CCUG 20993 / CIP 104536 / JCM 13569 / NCTC 13031 / TMC 1543 / L948) (Mycobacterium abscessus).